A 537-amino-acid chain; its full sequence is MSILNVIRSHHDVEPQNVEEEPPLTGQTIVTEDKLETSAKDKKHESPSMSEDEEGSVENVDAWDLTKALMSIDPNHPAHPHKWPLWKKLFVATVYTFLEVYVIWSSTACINFFDIYQTNWHCSIQVSYLVQSLFIVGNAFGPMLLGPMSDIFGRKWVYVGSLILYIIFQIPQALAYNLPMMAINSAIAGAFGSSALANVASSMCDIFTPETVGFGISLFVWGANAGASIGSPIGEALYDHWRWFYWMNMIVGGFFVILCVLCPETLPVINIMNYSSTTGEKTVQVSTLAKAKSAVVRTKFVLSTAFKLLCTEPIIMALGLYNGFAYGLIFLYLDGLFPVFVDNYKMGYMGANLTYLNFLVGVTIVVMLQPIQNWLYRWDKRRHGGVARPEARFLISLLTVWFFPAGLFWFAFTSDGRISWVSPLIAGGVLGVGDPQLWLAMINYITDSYPSVAGSAIAAFTLPSFAIAAVLVHLGIIMFDNMTTTWAMATLAFISLSLVATIYVIYFFGHLIRKHSRLAVTQQALQEAHDAKVLPEV.

Residues 10 to 56 form a disordered region; sequence HHDVEPQNVEEEPPLTGQTIVTEDKLETSAKDKKHESPSMSEDEEGS. Residues 31–46 are compositionally biased toward basic and acidic residues; it reads TEDKLETSAKDKKHES. A run of 12 helical transmembrane segments spans residues 90–110, 133–153, 156–176, 180–200, 213–233, 243–263, 313–333, 348–368, 393–413, 422–442, 457–477, and 492–512; these read FVAT…TACI, LFIV…DIFG, WVYV…ALAY, MMAI…ANVA, GFGI…GSPI, WFYW…VLCP, PIIM…FLYL, YMGA…VVML, FLIS…FAFT, SPLI…LAMI, IAAF…LGII, and AFIS…GHLI.

Belongs to the major facilitator superfamily. CAR1 family.

The protein resides in the endoplasmic reticulum. Its subcellular location is the golgi apparatus. It localises to the membrane. This is an uncharacterized protein from Schizosaccharomyces pombe (strain 972 / ATCC 24843) (Fission yeast).